A 130-amino-acid polypeptide reads, in one-letter code: Small ribosomal subunit protein uS9 (130 aa).

Belongs to the universal ribosomal protein uS9 family.

The polypeptide is Small ribosomal subunit protein uS9 (Bacillus anthracis (strain A0248)).